Reading from the N-terminus, the 195-residue chain is Holliday junction branch migration complex subunit RuvA (195 aa).

Positions 1–61 are domain I; the sequence is MYEYFEGIIS…DTGITLYGFQ (61 aa). The domain II stretch occupies residues 62 to 140; sequence DQDDKGLFLK…DYVARLDKPE (79 aa). Positions 141–146 are flexible linker; the sequence is NGEEIS. Residues 146 to 195 are domain III; the sequence is SPALNDALLALIALGYTQKEVDRITPKLVEIEADTADQYIKKGLALLLKK.

Belongs to the RuvA family. As to quaternary structure, homotetramer. Forms an RuvA(8)-RuvB(12)-Holliday junction (HJ) complex. HJ DNA is sandwiched between 2 RuvA tetramers; dsDNA enters through RuvA and exits via RuvB. An RuvB hexamer assembles on each DNA strand where it exits the tetramer. Each RuvB hexamer is contacted by two RuvA subunits (via domain III) on 2 adjacent RuvB subunits; this complex drives branch migration. In the full resolvosome a probable DNA-RuvA(4)-RuvB(12)-RuvC(2) complex forms which resolves the HJ.

The protein localises to the cytoplasm. The RuvA-RuvB-RuvC complex processes Holliday junction (HJ) DNA during genetic recombination and DNA repair, while the RuvA-RuvB complex plays an important role in the rescue of blocked DNA replication forks via replication fork reversal (RFR). RuvA specifically binds to HJ cruciform DNA, conferring on it an open structure. The RuvB hexamer acts as an ATP-dependent pump, pulling dsDNA into and through the RuvAB complex. HJ branch migration allows RuvC to scan DNA until it finds its consensus sequence, where it cleaves and resolves the cruciform DNA. In Lactobacillus acidophilus (strain ATCC 700396 / NCK56 / N2 / NCFM), this protein is Holliday junction branch migration complex subunit RuvA.